The chain runs to 722 residues: Serine/threonine-protein kinase MARK2 (722 aa).

Residues 1–46 (MSSARTPLPTLNERDTEQPTLGHLDSKPSSKSNMLRGRNSATSADE) are disordered. Positions 27 to 45 (KPSSKSNMLRGRNSATSAD) are enriched in polar residues. Ser40 carries the post-translational modification Phosphoserine. The Protein kinase domain maps to 53–304 (YRLLKTIGKG…LEQIMKDRWM (252 aa)). The residue at position 58 (Thr58) is a Phosphothreonine; by autocatalysis. ATP is bound by residues 59–67 (IGKGNFAKV) and Lys82. Ser91, Ser92, and Ser93 each carry phosphoserine; by CaMK1. The Proton acceptor role is filled by Asp175. Thr208 is modified (phosphothreonine; by LKB1 and TAOK1). Residue Ser212 is modified to Phosphoserine; by GSK3-beta. Ser274 bears the Phosphoserine; by autocatalysis mark. A Phosphothreonine; by autocatalysis modification is found at Thr275. Phosphothreonine; by CaMK1 is present on Thr294. In terms of domain architecture, UBA spans 323–362 (YKDPRRTELMVSMGYTREEIQDSLVGQRYNEVMATYLLLG). The segment at 373-576 (ITLKPRPSAD…SQGRRGASGS (204 aa)) is disordered. Phosphoserine occurs at positions 408 and 409. The span at 417–431 (PTSNSYSKKTQSNNA) shows a compositional bias: polar residues. Positions 432-442 (ENKRPEEETGR) are enriched in basic and acidic residues. Ser453 bears the Phosphoserine mark. Thr464 is subject to Phosphothreonine. Residues 464–483 (TPTPSTNSVLSTSTNRSRNS) show a composition bias toward polar residues. Phosphoserine is present on residues Ser483 and Ser490. The span at 492–505 (GQASIQNGKDSTAP) shows a compositional bias: polar residues. Residues 511-524 (ASPSAHNISSSSGA) show a composition bias toward low complexity. Phosphoserine is present on residues Ser512, Ser514, and Ser535. Thr539 carries the phosphothreonine; by PKC/PRKCZ modification. 2 positions are modified to phosphoserine: Ser562 and Ser656. A KA1 domain is found at 673–722 (TPGHENFVQWEMEVCKLPRLSLNGVRFKRISGTSMAFKNIASKIANELKL).

This sequence belongs to the protein kinase superfamily. CAMK Ser/Thr protein kinase family. SNF1 subfamily. Homodimer. Interacts (when phosphorylated at Thr-539) with YWHAZ. Interacts with MTCL1; the interaction is direct and increases MARK2 microtubule-binding ability. Interacts with PAK5; leading to inhibit the protein kinase activity. Interacts with MAPT/TAU. Interacts with YWHAB, YWHAG and YWHAQ. Requires Mg(2+) as cofactor. Autophosphorylated. Phosphorylated at Thr-208 by STK11/LKB1 in complex with STE20-related adapter-alpha (STRADA) pseudo kinase and CAB39. Phosphorylation at Thr-208 by TAOK1 activates the kinase activity, leading to phosphorylation and detachment of MAPT/TAU from microtubules. Phosphorylation at Ser-212 by GSK3-beta (GSK3B) inhibits the kinase activity. Phosphorylation by CaMK1 promotes activity and is required to promote neurite outgrowth. Phosphorylation at Thr-539 by PRKCZ/aPKC in polarized epithelial cells inhibits the kinase activity and promotes binding to 14-3-3 protein YWHAZ, leading to relocation from cell membrane to cytoplasm.

It localises to the cell membrane. The protein resides in the lateral cell membrane. It is found in the cytoplasm. Its subcellular location is the cytoskeleton. The protein localises to the cell projection. It localises to the dendrite. The enzyme catalyses L-seryl-[protein] + ATP = O-phospho-L-seryl-[protein] + ADP + H(+). It catalyses the reaction L-threonyl-[protein] + ATP = O-phospho-L-threonyl-[protein] + ADP + H(+). It carries out the reaction L-seryl-[tau protein] + ATP = O-phospho-L-seryl-[tau protein] + ADP + H(+). The catalysed reaction is L-threonyl-[tau protein] + ATP = O-phospho-L-threonyl-[tau protein] + ADP + H(+). Inhibited by hymenialdisine. Activated by phosphorylation on Thr-208 by STK11/LKB1 and TAOK1. Inhibited by phosphorylation at Ser-212 or Thr-539. Inhibited by PAK5; inhibition is independent of the kinase activity of PAK5. Serine/threonine-protein kinase. Involved in cell polarity and microtubule dynamics regulation. Phosphorylates CRTC2/TORC2, DCX, HDAC7, KIF13B, MAP2, MAP4 and RAB11FIP2. Phosphorylates the microtubule-associated protein MAPT/TAU. Plays a key role in cell polarity by phosphorylating the microtubule-associated proteins MAP2, MAP4 and MAPT/TAU at KXGS motifs, causing detachment from microtubules, and their disassembly. Regulates epithelial cell polarity by phosphorylating RAB11FIP2. Involved in the regulation of neuronal migration through its dual activities in regulating cellular polarity and microtubule dynamics, possibly by phosphorylating and regulating DCX. Regulates axogenesis by phosphorylating KIF13B, promoting interaction between KIF13B and 14-3-3 and inhibiting microtubule-dependent accumulation of KIF13B. Also required for neurite outgrowth and establishment of neuronal polarity. Regulates localization and activity of some histone deacetylases by mediating phosphorylation of HDAC7, promoting subsequent interaction between HDAC7 and 14-3-3 and export from the nucleus. Also acts as a positive regulator of the Wnt signaling pathway, probably by mediating phosphorylation of dishevelled proteins (DVL1, DVL2 and/or DVL3). Modulates the developmental decision to build a columnar versus a hepatic epithelial cell apparently by promoting a switch from a direct to a transcytotic mode of apical protein delivery. Essential for the asymmetric development of membrane domains of polarized epithelial cells. The sequence is that of Serine/threonine-protein kinase MARK2 from Rattus norvegicus (Rat).